Here is a 342-residue protein sequence, read N- to C-terminus: N-acetyl-gamma-glutamyl-phosphate reductase (342 aa).

Cysteine 148 is an active-site residue.

Belongs to the NAGSA dehydrogenase family. Type 1 subfamily.

Its subcellular location is the cytoplasm. The catalysed reaction is N-acetyl-L-glutamate 5-semialdehyde + phosphate + NADP(+) = N-acetyl-L-glutamyl 5-phosphate + NADPH + H(+). Its pathway is amino-acid biosynthesis; L-arginine biosynthesis; N(2)-acetyl-L-ornithine from L-glutamate: step 3/4. In terms of biological role, catalyzes the NADPH-dependent reduction of N-acetyl-5-glutamyl phosphate to yield N-acetyl-L-glutamate 5-semialdehyde. This Methanococcus vannielii (strain ATCC 35089 / DSM 1224 / JCM 13029 / OCM 148 / SB) protein is N-acetyl-gamma-glutamyl-phosphate reductase.